A 447-amino-acid chain; its full sequence is Diaminopimelate decarboxylase (447 aa).

An N6-(pyridoxal phosphate)lysine modification is found at Lys72. Pyridoxal 5'-phosphate contacts are provided by residues Gly258 and Glu300–Arg303. Positions 303, 344, and 348 each coordinate substrate. Cys375 acts as the Proton donor in catalysis. The substrate site is built by Glu376 and Tyr405. Tyr405 is a pyridoxal 5'-phosphate binding site.

This sequence belongs to the Orn/Lys/Arg decarboxylase class-II family. LysA subfamily. In terms of assembly, homodimer. It depends on pyridoxal 5'-phosphate as a cofactor.

The enzyme catalyses meso-2,6-diaminopimelate + H(+) = L-lysine + CO2. It participates in amino-acid biosynthesis; L-lysine biosynthesis via DAP pathway; L-lysine from DL-2,6-diaminopimelate: step 1/1. In terms of biological role, specifically catalyzes the decarboxylation of meso-diaminopimelate (meso-DAP) to L-lysine. The sequence is that of Diaminopimelate decarboxylase from Mycobacterium bovis (strain ATCC BAA-935 / AF2122/97).